Here is a 284-residue protein sequence, read N- to C-terminus: Nucleotide-binding protein Sbal195_0713 (284 aa).

ATP is bound at residue 8–15 (GRSGSGKS). 56-59 (DVRN) serves as a coordination point for GTP.

Belongs to the RapZ-like family.

Displays ATPase and GTPase activities. This chain is Nucleotide-binding protein Sbal195_0713, found in Shewanella baltica (strain OS195).